A 414-amino-acid chain; its full sequence is Multifunctional CCA protein (414 aa).

ATP contacts are provided by Gly8 and Arg11. Positions 8 and 11 each coordinate CTP. Positions 21 and 23 each coordinate Mg(2+). Arg91, Arg137, and Arg140 together coordinate ATP. Residues Arg91, Arg137, and Arg140 each coordinate CTP. Residues 228 to 329 (TGIHTLMVLE…VKLFDKGDFW (102 aa)) enclose the HD domain.

The protein belongs to the tRNA nucleotidyltransferase/poly(A) polymerase family. Bacterial CCA-adding enzyme type 1 subfamily. As to quaternary structure, monomer. Can also form homodimers and oligomers. It depends on Mg(2+) as a cofactor. Ni(2+) is required as a cofactor.

It catalyses the reaction a tRNA precursor + 2 CTP + ATP = a tRNA with a 3' CCA end + 3 diphosphate. The enzyme catalyses a tRNA with a 3' CCA end + 2 CTP + ATP = a tRNA with a 3' CCACCA end + 3 diphosphate. Functionally, catalyzes the addition and repair of the essential 3'-terminal CCA sequence in tRNAs without using a nucleic acid template. Adds these three nucleotides in the order of C, C, and A to the tRNA nucleotide-73, using CTP and ATP as substrates and producing inorganic pyrophosphate. tRNA 3'-terminal CCA addition is required both for tRNA processing and repair. Also involved in tRNA surveillance by mediating tandem CCA addition to generate a CCACCA at the 3' terminus of unstable tRNAs. While stable tRNAs receive only 3'-terminal CCA, unstable tRNAs are marked with CCACCA and rapidly degraded. This chain is Multifunctional CCA protein, found in Shewanella frigidimarina (strain NCIMB 400).